The following is a 257-amino-acid chain: Acyl-[acyl-carrier-protein]--UDP-N-acetylglucosamine O-acyltransferase (257 aa).

The protein belongs to the transferase hexapeptide repeat family. LpxA subfamily. As to quaternary structure, homotrimer.

It localises to the cytoplasm. The enzyme catalyses a (3R)-hydroxyacyl-[ACP] + UDP-N-acetyl-alpha-D-glucosamine = a UDP-3-O-[(3R)-3-hydroxyacyl]-N-acetyl-alpha-D-glucosamine + holo-[ACP]. It functions in the pathway glycolipid biosynthesis; lipid IV(A) biosynthesis; lipid IV(A) from (3R)-3-hydroxytetradecanoyl-[acyl-carrier-protein] and UDP-N-acetyl-alpha-D-glucosamine: step 1/6. Functionally, involved in the biosynthesis of lipid A, a phosphorylated glycolipid that anchors the lipopolysaccharide to the outer membrane of the cell. In Fusobacterium nucleatum subsp. nucleatum (strain ATCC 25586 / DSM 15643 / BCRC 10681 / CIP 101130 / JCM 8532 / KCTC 2640 / LMG 13131 / VPI 4355), this protein is Acyl-[acyl-carrier-protein]--UDP-N-acetylglucosamine O-acyltransferase.